Consider the following 364-residue polypeptide: MTKYTVAVAGATGYAGGEALRILAAHPAFEVTAVAGHSSIGHRLGEYQPHIPQLADLIVEDTTPAVLDGHDVIVLALPHGASGALAAQLDDDAVVVDLGADHRLERQQAWDDYYGGDFYQHWTYGMPELILGIGSDGKYVRQRDELTGAKRIAGPGCNVTATTLALQPAIAQGLVDTKSIVADLAVGYSGAGKNLKRTNLLASEAMGSASPYSVGGTHRHIPEIRQNFAHAAGLGASQADMFSLAFTPILVPMSRGILASVSAKLTDEALALTDEQIHDIWVQAYEGQEFIFVLDPGVMPATQNVLGSNAAHVQVAVDRRSGTLHAFTAIDNLNRGTAGQAIESLNIAFGLNDATGLSKIGVAP.

The active site involves Cys157.

This sequence belongs to the NAGSA dehydrogenase family. Type 1 subfamily.

The protein resides in the cytoplasm. It catalyses the reaction N-acetyl-L-glutamate 5-semialdehyde + phosphate + NADP(+) = N-acetyl-L-glutamyl 5-phosphate + NADPH + H(+). The protein operates within amino-acid biosynthesis; L-arginine biosynthesis; N(2)-acetyl-L-ornithine from L-glutamate: step 3/4. Catalyzes the NADPH-dependent reduction of N-acetyl-5-glutamyl phosphate to yield N-acetyl-L-glutamate 5-semialdehyde. The sequence is that of N-acetyl-gamma-glutamyl-phosphate reductase from Bifidobacterium animalis subsp. lactis (strain AD011).